The primary structure comprises 137 residues: Putative pre-16S rRNA nuclease (137 aa).

This sequence belongs to the YqgF nuclease family.

Its subcellular location is the cytoplasm. In terms of biological role, could be a nuclease involved in processing of the 5'-end of pre-16S rRNA. The polypeptide is Putative pre-16S rRNA nuclease (Bacillus cereus (strain 03BB102)).